Reading from the N-terminus, the 354-residue chain is UPF0283 membrane protein CGSHiGG_02710 (354 aa).

The next 3 membrane-spanning stretches (helical) occupy residues 57–77 (LLKFTALLFGLATVAQSVQWI), 87–107 (IYLAFALVSLIIILLGIKEII), and 211–231 (ESAVIVAISPLAVVDMFFIAW).

This sequence belongs to the UPF0283 family.

It is found in the cell inner membrane. The sequence is that of UPF0283 membrane protein CGSHiGG_02710 from Haemophilus influenzae (strain PittGG).